A 288-amino-acid polypeptide reads, in one-letter code: MRIRVPATTANLGPGFDSCGLALTLYLTLDIGAEADSWYIEHNIGGGIPHDETNVIIETALNLAPNLTPHHLVMTCDIPPARGLGSSSAAVVAGIELANTLAELNLSKEEKVRIAAEIEGHPDNVAPAVLGNWVVGAKLDGEDFYVRHLFPDCALIAFIPKAELLTSESRGVLPDTLPFKEAVQASSIANVMIAAILRNDMTLAGEMMERDLWHEKYRSQLVPHLTQIRDVAKSQGAYAACLSGAGPTVLVFAPRNLANKLQTSLQTLEIDADVLLLDVEGSGAEVFR.

79-89 (PPARGLGSSSA) contributes to the ATP binding site.

The protein belongs to the GHMP kinase family. Homoserine kinase subfamily.

The protein localises to the cytoplasm. The enzyme catalyses L-homoserine + ATP = O-phospho-L-homoserine + ADP + H(+). It functions in the pathway amino-acid biosynthesis; L-threonine biosynthesis; L-threonine from L-aspartate: step 4/5. Functionally, catalyzes the ATP-dependent phosphorylation of L-homoserine to L-homoserine phosphate. The chain is Homoserine kinase from Listeria monocytogenes serotype 4a (strain HCC23).